We begin with the raw amino-acid sequence, 876 residues long: Eukaryotic translation initiation factor 3 subunit C (876 aa).

Disordered regions lie at residues 1 to 25 (MSRF…VVRA) and 154 to 233 (SXFR…IREQ). Residues 11–20 (SESESSSEDE) are compositionally biased toward acidic residues. 2 stretches are compositionally biased toward basic and acidic residues: residues 154-172 (SXFR…KDSS) and 182-192 (KPIKEKPKPEP). Over residues 206–219 (SMDWASSSSDSSFS) the composition is skewed to low complexity. The PCI domain occupies 632 to 808 (FHMHINLELL…ECAILHRSEP (177 aa)). The interval 839–876 (FFQRGGAQRGEGRQRERPREGWNRRTRNRRRDDERADD) is disordered. Positions 848–861 (GEGRQRERPREGWN) are enriched in basic and acidic residues.

The protein belongs to the eIF-3 subunit C family. As to quaternary structure, component of the eukaryotic translation initiation factor 3 (eIF-3) complex.

The protein localises to the cytoplasm. Functionally, component of the eukaryotic translation initiation factor 3 (eIF-3) complex, which is involved in protein synthesis of a specialized repertoire of mRNAs and, together with other initiation factors, stimulates binding of mRNA and methionyl-tRNAi to the 40S ribosome. The eIF-3 complex specifically targets and initiates translation of a subset of mRNAs involved in cell proliferation. This Bombyx mori (Silk moth) protein is Eukaryotic translation initiation factor 3 subunit C.